We begin with the raw amino-acid sequence, 122 residues long: Large ribosomal subunit protein uL14 (122 aa).

The protein belongs to the universal ribosomal protein uL14 family. In terms of assembly, part of the 50S ribosomal subunit. Forms a cluster with proteins L3 and L19. In the 70S ribosome, L14 and L19 interact and together make contacts with the 16S rRNA in bridges B5 and B8.

In terms of biological role, binds to 23S rRNA. Forms part of two intersubunit bridges in the 70S ribosome. This chain is Large ribosomal subunit protein uL14, found in Burkholderia lata (strain ATCC 17760 / DSM 23089 / LMG 22485 / NCIMB 9086 / R18194 / 383).